A 163-amino-acid polypeptide reads, in one-letter code: Oocyte-secreted protein 1 (163 aa).

The N-terminal stretch at methionine 1–alanine 21 is a signal peptide.

This sequence belongs to the PLAC1 family. In terms of tissue distribution, oocyte-specific.

The protein resides in the secreted. Its function is as follows. May be involved in cell differentiation. This Bos taurus (Bovine) protein is Oocyte-secreted protein 1 (OOSP1).